Reading from the N-terminus, the 294-residue chain is Protein ATC1/LIC4 (294 aa).

The disordered stretch occupies residues 114–178 (YTGKASLDKS…SSSLASSDAN (65 aa)). Positions 130 to 145 (HKPDKEQKNYKIDKPT) are enriched in basic and acidic residues. A compositionally biased stretch (low complexity) spans 153–175 (LKTTNEPMLSPASLSPSSSLASS).

It localises to the cytoplasm. The protein localises to the nucleus. In terms of biological role, involved in cation homeostasis and in the regulation of the cation stress signaling cascades. Also involved in bipolar budding. In Saccharomyces cerevisiae (strain ATCC 204508 / S288c) (Baker's yeast), this protein is Protein ATC1/LIC4 (ATC1).